Consider the following 360-residue polypeptide: NAD(P)H-quinone oxidoreductase subunit 1, chloroplastic (360 aa).

9 helical membrane passes run 27-47, 98-118, 129-149, 165-185, 203-223, 248-268, 269-289, 297-317, and 340-360; these read IWIF…VLVI, FSIG…VIPF, IGIF…LMSG, AAQS…ISLL, FWGW…ISSL, YSGI…LISS, LFVT…ISIL, IFGT…FLFI, and FLLP…LFSL.

It belongs to the complex I subunit 1 family. As to quaternary structure, NDH is composed of at least 16 different subunits, 5 of which are encoded in the nucleus.

The protein resides in the plastid. Its subcellular location is the chloroplast thylakoid membrane. It carries out the reaction a plastoquinone + NADH + (n+1) H(+)(in) = a plastoquinol + NAD(+) + n H(+)(out). The catalysed reaction is a plastoquinone + NADPH + (n+1) H(+)(in) = a plastoquinol + NADP(+) + n H(+)(out). NDH shuttles electrons from NAD(P)H:plastoquinone, via FMN and iron-sulfur (Fe-S) centers, to quinones in the photosynthetic chain and possibly in a chloroplast respiratory chain. The immediate electron acceptor for the enzyme in this species is believed to be plastoquinone. Couples the redox reaction to proton translocation, and thus conserves the redox energy in a proton gradient. In Olimarabidopsis pumila (Dwarf rocket), this protein is NAD(P)H-quinone oxidoreductase subunit 1, chloroplastic.